The sequence spans 103 residues: N(4)-acetylcytidine amidohydrolase (103 aa).

One can recognise an ASCH domain in the interval 6–92 (TFFERFEQDI…VIQEIYPGLE (87 aa)). The active-site Proton acceptor is the K20. T23 serves as the catalytic Nucleophile. E73 serves as the catalytic Proton donor.

This sequence belongs to the N(4)-acetylcytidine amidohydrolase family.

It carries out the reaction N(4)-acetylcytidine + H2O = cytidine + acetate + H(+). The catalysed reaction is N(4)-acetyl-2'-deoxycytidine + H2O = 2'-deoxycytidine + acetate + H(+). It catalyses the reaction N(4)-acetylcytosine + H2O = cytosine + acetate + H(+). Catalyzes the hydrolysis of N(4)-acetylcytidine (ac4C). This chain is N(4)-acetylcytidine amidohydrolase, found in Shewanella sp. (strain MR-4).